Reading from the N-terminus, the 460-residue chain is Polygalacturonase (460 aa).

A signal peptide spans 1-26 (MALKTQLLWSFVVVFVVSFSTTSCSG). Asparagine 280 carries N-linked (GlcNAc...) asparagine glycosylation. Aspartate 292 serves as the catalytic Proton donor. The active site involves histidine 315. Asparagine 421 carries an N-linked (GlcNAc...) asparagine glycan.

The protein belongs to the glycosyl hydrolase 28 family.

The protein resides in the secreted. It localises to the cell wall. It carries out the reaction (1,4-alpha-D-galacturonosyl)n+m + H2O = (1,4-alpha-D-galacturonosyl)n + (1,4-alpha-D-galacturonosyl)m.. In terms of biological role, acts in concert with the pectinesterase, in the ripening process. Is involved in cell wall metabolism, specifically in polyuronide degradation. In Malus domestica (Apple), this protein is Polygalacturonase.